Consider the following 258-residue polypeptide: Imidazole glycerol phosphate synthase subunit HisF (258 aa).

Active-site residues include Asp11 and Asp130.

It belongs to the HisA/HisF family. As to quaternary structure, heterodimer of HisH and HisF.

It localises to the cytoplasm. The enzyme catalyses 5-[(5-phospho-1-deoxy-D-ribulos-1-ylimino)methylamino]-1-(5-phospho-beta-D-ribosyl)imidazole-4-carboxamide + L-glutamine = D-erythro-1-(imidazol-4-yl)glycerol 3-phosphate + 5-amino-1-(5-phospho-beta-D-ribosyl)imidazole-4-carboxamide + L-glutamate + H(+). It functions in the pathway amino-acid biosynthesis; L-histidine biosynthesis; L-histidine from 5-phospho-alpha-D-ribose 1-diphosphate: step 5/9. Its function is as follows. IGPS catalyzes the conversion of PRFAR and glutamine to IGP, AICAR and glutamate. The HisF subunit catalyzes the cyclization activity that produces IGP and AICAR from PRFAR using the ammonia provided by the HisH subunit. The protein is Imidazole glycerol phosphate synthase subunit HisF of Xanthomonas euvesicatoria pv. vesicatoria (strain 85-10) (Xanthomonas campestris pv. vesicatoria).